The following is a 77-amino-acid chain: Integrin beta-2 (77 aa).

C36 and C43 form a disulfide bridge. A glycan (N-linked (GlcNAc...) asparagine) is linked at N54.

The protein belongs to the integrin beta chain family. Dimer of an alpha and beta subunit.

The protein resides in the membrane. Its function is as follows. Integrins are a large family of cell surface glycoproteins that mediate cell to cell and cell to matrix adhesion. In Xenopus laevis (African clawed frog), this protein is Integrin beta-2 (itgb2).